Here is a 501-residue protein sequence, read N- to C-terminus: MLSTQAELAAFHSGLGQPLQFVPTMGGLHQGHGELIRRAAEQGPVLVSVFVNPLQFAPGEDFERYPRSLEADLALADRYGAAALWTPTVQTIYPDGATADSARQAPAALQQHLCGADRPGHFDGVVTVVARLLELTRPAGLWLGEKDWQQLVILRQLVADLVLPVKIHGVATVREADGLALSSRNQYLSAAQRLQAAALPAALRAADGTTPLDVTRSRLSAAGLEVEYVERVDPQSLQPCGSETALSLLAAAVRCGTTRLIDHSFLMTRQPLVAIDGPAGAGKSTVTRAFAERLGLIYLDTGAMYRAVTWLVQQQGVEPGDAAAVDALLRALDLQLQSLPGGGQQVMVNGEDVSQAIRSPEVTGSVSVVAAHRCVRQALTTQQKAMGAKGGLVAEGRDIGSAVFPDADLKVFLTATVAERARRRALDLEQRGFPVQERSELEAQIAERDHLDSTREEAPLVQAIDAVELVTDGMSIDAVIDALVEQFRARVPEEAWPTPAG.

The tract at residues 1–264 (MLSTQAELAA…CGTTRLIDHS (264 aa)) is pantoate--beta-alanine ligase. 25–32 (MGGLHQGH) serves as a coordination point for ATP. Histidine 32 acts as the Proton donor in catalysis. Glutamine 55 provides a ligand contact to (R)-pantoate. Residue glutamine 55 participates in beta-alanine binding. ATP is bound at residue 144 to 147 (GEKD). Residue glutamine 150 coordinates (R)-pantoate. ATP is bound by residues valine 173 and 181-184 (LSSR). Residues 265 to 501 (FLMTRQPLVA…PEEAWPTPAG (237 aa)) are cytidylate kinase.

The protein in the N-terminal section; belongs to the pantothenate synthetase family. In the C-terminal section; belongs to the cytidylate kinase family. Type 1 subfamily.

Its subcellular location is the cytoplasm. The catalysed reaction is (R)-pantoate + beta-alanine + ATP = (R)-pantothenate + AMP + diphosphate + H(+). The enzyme catalyses CMP + ATP = CDP + ADP. It catalyses the reaction dCMP + ATP = dCDP + ADP. It functions in the pathway cofactor biosynthesis; (R)-pantothenate biosynthesis; (R)-pantothenate from (R)-pantoate and beta-alanine: step 1/1. Catalyzes the condensation of pantoate with beta-alanine in an ATP-dependent reaction via a pantoyl-adenylate intermediate. Functionally, catalyzes the transfer of a phosphate group from ATP to either CMP or dCMP to form CDP or dCDP and ADP, respectively. This Parasynechococcus marenigrum (strain WH8102) protein is Bifunctional pantoate ligase/cytidylate kinase.